A 173-amino-acid polypeptide reads, in one-letter code: Probable DNA-directed RNA polymerase subunit delta (173 aa).

The region spanning 14–81 (NSFIDLAYMA…GEYMWGLRDW (68 aa)) is the HTH HARE-type domain. Residues 113–173 (LLGEDEVEDE…DEFDDEEEEE (61 aa)) form a disordered region. Acidic residues predominate over residues 115-173 (GEDEVEDELDLLPSDGDEENVDTEDEEVEDELDEAGLVVEPDEEFEDEEDEFDDEEEEE).

This sequence belongs to the RpoE family. RNAP is composed of a core of 2 alpha, a beta and a beta' subunits. The core is associated with a delta subunit and one of several sigma factors.

Its function is as follows. Participates in both the initiation and recycling phases of transcription. In the presence of the delta subunit, RNAP displays an increased specificity of transcription, a decreased affinity for nucleic acids, and an increased efficiency of RNA synthesis because of enhanced recycling. This is Probable DNA-directed RNA polymerase subunit delta from Macrococcus caseolyticus (strain JCSC5402) (Macrococcoides caseolyticum).